Consider the following 119-residue polypeptide: Large ribosomal subunit protein bL20 (119 aa).

This sequence belongs to the bacterial ribosomal protein bL20 family.

Functionally, binds directly to 23S ribosomal RNA and is necessary for the in vitro assembly process of the 50S ribosomal subunit. It is not involved in the protein synthesizing functions of that subunit. In Granulibacter bethesdensis (strain ATCC BAA-1260 / CGDNIH1), this protein is Large ribosomal subunit protein bL20.